The sequence spans 628 residues: Serine/threonine-protein kinase Nek11 (628 aa).

The Protein kinase domain occupies 30 to 288; the sequence is YVLQQKLGSG…AADILKAPYM (259 aa). Residues 36 to 44 and K62 contribute to the ATP site; that span reads LGSGSFGTV. D159 functions as the Proton acceptor in the catalytic mechanism. S274 carries the phosphoserine; by CHEK1 modification. Residues 347–385 adopt a coiled-coil conformation; that stretch reads WLRKLQAADERARRLKKIAEENYKENDKRMQALRSRNVG. The segment covering 452 to 463 has biased composition (acidic residues); that stretch reads SEDSEEQEEEMI. Positions 452–475 are disordered; the sequence is SEDSEEQEEEMIFSEAGGDTKEEE.

It belongs to the protein kinase superfamily. NEK Ser/Thr protein kinase family. NIMA subfamily. In terms of assembly, interacts with NEK2. Mn(2+) is required as a cofactor. Requires Mg(2+) as cofactor. Phosphorylated by NEK2. Phosphorylation at Ser-274 is important for its activation.

The protein localises to the nucleus. It is found in the nucleolus. The catalysed reaction is L-seryl-[protein] + ATP = O-phospho-L-seryl-[protein] + ADP + H(+). The enzyme catalyses L-threonyl-[protein] + ATP = O-phospho-L-threonyl-[protein] + ADP + H(+). With respect to regulation, autorepressed by intramolecular binding of the C-terminus which dissociates following phosphorylation by NEK2. Activated in response to DNA damage. Inhibited by zinc. Protein kinase which plays an important role in the G2/M checkpoint response to DNA damage. Controls degradation of CDC25A by directly phosphorylating it on residues whose phosphorylation is required for BTRC-mediated polyubiquitination and degradation. The protein is Serine/threonine-protein kinase Nek11 of Mus musculus (Mouse).